A 332-amino-acid chain; its full sequence is MSLCNLAKIRSVAIKAVEKACIACLDIQKQLISEDTINKKDQSPVTVGDYTVQALVINELLKGLDEEYPIIAEEDSKTLSSQKDVESKVLSFFNRYSNESFVESQLSSLLDKGNKKKDLNSSNRWWTLDPIDGTLGFLRKDQYAVALALMEDNKPILGILGCPNLPVSKGSTEKGCIFVGLKNKGSFMIKLSNLDQEEPIKVSNQSDPTKAIFTESFVSRGFGHELNQKISNSMGVTAEPLKIDSQCKYAMVARGDSDCYLRLTQLDYKECIWDHAAGHIIVEEAGGIVTDFKKQQLDYSKGFKLENNVGIVCSNKLLNDSLFDSIKKSIQF.

Catalysis depends on D49, which acts as the Proton acceptor. Residues E73, D129, I131, and D132 each coordinate Mg(2+). The Proton acceptor role is filled by T134. The adenosine 3',5'-bisphosphate site is built by T134, S245, K248, R262, and D274. The AMP site is built by S245, K248, R262, and D274. D274 contacts Mg(2+).

Belongs to the inositol monophosphatase superfamily. Requires Mg(2+) as cofactor.

The enzyme catalyses 3'-phosphoadenylyl sulfate + H2O = adenosine 5'-phosphosulfate + phosphate. It catalyses the reaction adenosine 3',5'-bisphosphate + H2O = AMP + phosphate. It carries out the reaction adenosine 2',5'-bisphosphate + H2O = AMP + phosphate. The catalysed reaction is 1D-myo-inositol 1,4-bisphosphate + H2O = 1D-myo-inositol 4-phosphate + phosphate. The enzyme catalyses 1D-myo-inositol 1,3,4-trisphosphate + H2O = 1D-myo-inositol 3,4-bisphosphate + phosphate. Phosphatase that converts adenosine 3'-phosphate 5'-phosphosulfate (PAPS) to adenosine 5'-phosphosulfate (APS) and 3'(2')-phosphoadenosine 5'-phosphate (PAP) to AMP. Is also able to hydrolyze inositol 1,4-bisphosphate and inositol 1,3,4-trisphosphate. In Dictyostelium discoideum (Social amoeba), this protein is 3'(2'),5'-bisphosphate nucleotidase.